Reading from the N-terminus, the 198-residue chain is CASP-like protein 4B3 (198 aa).

The disordered stretch occupies residues 1–27 (MSSSGPPAGDGRDDASGPGPAGAAAAA). Residues 1–51 (MSSSGPPAGDGRDDASGPGPAGAAAAADGSVPVSRSIVERWKMEPAAARAR) are Cytoplasmic-facing. A compositionally biased stretch (low complexity) spans 16–27 (SGPGPAGAAAAA). The chain crosses the membrane as a helical span at residues 52–72 (LLLRAVAWLFSLLALVVMASN). Over 73-85 (KHGHGGAQDFDNY) the chain is Extracellular. A helical membrane pass occupies residues 86 to 106 (PEYTYCLGISIIAVLYTTAQV). Over 107–124 (TRDVHRLSWGRDVIAGRK) the chain is Cytoplasmic. A helical membrane pass occupies residues 125–145 (AAAVVDFAGDQVVAYLLMSAL). The Extracellular portion of the chain corresponds to 146–166 (SAAAPVTDYMRQAADNLFTDS). Residues 167-187 (AAAAISMAFLAFLAAGLSALV) traverse the membrane as a helical segment. The Cytoplasmic segment spans residues 188 to 198 (SGYNLAMEVLV).

The protein belongs to the Casparian strip membrane proteins (CASP) family. As to quaternary structure, homodimer and heterodimers.

It is found in the cell membrane. The polypeptide is CASP-like protein 4B3 (Oryza sativa subsp. japonica (Rice)).